The primary structure comprises 154 residues: Myoglobin (154 aa).

The region spanning 2-148 (GLSDAEWQLV…FRNDIAAQYK (147 aa)) is the Globin domain. Ser-4 carries the phosphoserine modification. A nitrite-binding site is contributed by His-65. An O2-binding site is contributed by His-65. Thr-68 is subject to Phosphothreonine. Residue His-94 participates in heme b binding.

This sequence belongs to the globin family. Monomeric.

Its subcellular location is the cytoplasm. The protein resides in the sarcoplasm. The catalysed reaction is Fe(III)-heme b-[protein] + nitric oxide + H2O = Fe(II)-heme b-[protein] + nitrite + 2 H(+). It catalyses the reaction H2O2 + AH2 = A + 2 H2O. Monomeric heme protein which primary function is to store oxygen and facilitate its diffusion within muscle tissues. Reversibly binds oxygen through a pentacoordinated heme iron and enables its timely and efficient release as needed during periods of heightened demand. Depending on the oxidative conditions of tissues and cells, and in addition to its ability to bind oxygen, it also has a nitrite reductase activity whereby it regulates the production of bioactive nitric oxide. Under stress conditions, like hypoxia and anoxia, it also protects cells against reactive oxygen species thanks to its pseudoperoxidase activity. This Oryctolagus cuniculus (Rabbit) protein is Myoglobin (MB).